We begin with the raw amino-acid sequence, 365 residues long: Protein AC54 (365 aa).

In terms of assembly, interacts with C42 and VP80. Interacts with protein 38K.

It is found in the virion. In terms of biological role, structural protein that participates in nucleocapsid assembly. Plays an essential role in the proper localization of the major capsid protein VP39, and the minor capsid protein 38K into the capsid assembly site. The polypeptide is Protein AC54 (AC54) (Lepidoptera (butterflies and moths)).